Reading from the N-terminus, the 263-residue chain is L-erythrulose-1-phosphate isomerase (263 aa).

Catalysis depends on His-106, which acts as the Electrophile. Glu-178 (proton acceptor) is an active-site residue.

The protein belongs to the triosephosphate isomerase family.

It carries out the reaction L-erythrulose 1-phosphate = D-erythrulose 4-phosphate. It functions in the pathway carbohydrate metabolism; L-threitol degradation. Functionally, catalyzes the isomerization of L-erythrulose-1P to D-erythrulose-4P. Involved in the degradation pathway of L-threitol, that allows M.smegmatis to grow on this compound as the sole carbon source. The polypeptide is L-erythrulose-1-phosphate isomerase (Mycolicibacterium smegmatis (strain ATCC 700084 / mc(2)155) (Mycobacterium smegmatis)).